We begin with the raw amino-acid sequence, 363 residues long: Cyclin-D1-1 (363 aa).

A disordered region spans residues 39–77; the sequence is ELEREGEPAQGSSPSSSLSCAAAAAAAADDDDEDEDEHG. Residues 50 to 65 show a composition bias toward low complexity; that stretch reads SSPSSSLSCAAAAAAA. Residues 66–75 are compositionally biased toward acidic residues; that stretch reads ADDDDEDEDE.

It belongs to the cyclin family. Cyclin D subfamily.

This is Cyclin-D1-1 (CYCD1-1) from Oryza sativa subsp. japonica (Rice).